We begin with the raw amino-acid sequence, 293 residues long: HTH-type transcriptional regulator HdfR (293 aa).

In terms of domain architecture, HTH lysR-type spans 1–58 (MDTELLKTFLEVSRTRHFGRAAESLYLTQSAVSFRIRQLENQLGANLFTRHRNNIRLT). The segment at residues 18 to 37 (FGRAAESLYLTQSAVSFRIR) is a DNA-binding region (H-T-H motif).

It belongs to the LysR transcriptional regulatory family.

Its function is as follows. Negatively regulates the transcription of the flagellar master operon flhDC by binding to the upstream region of the operon. This is HTH-type transcriptional regulator HdfR from Yersinia enterocolitica serotype O:8 / biotype 1B (strain NCTC 13174 / 8081).